Reading from the N-terminus, the 238-residue chain is Cysteine-rich venom protein kaouthin-2 (238 aa).

Residues 1-19 (MIAFIVLLSLAAVLQQSSG) form the signal peptide. Positions 20-25 (TVDFAS) are excised as a propeptide. One can recognise an SCP domain in the interval 38–164 (VDKHNALRRS…SSKYLYVCQY (127 aa)). Intrachain disulfides connect Cys-75–Cys-153, Cys-92–Cys-165, Cys-148–Cys-162, Cys-184–Cys-191, Cys-187–Cys-196, Cys-200–Cys-233, Cys-209–Cys-227, and Cys-218–Cys-231. The ShKT domain maps to 200–233 (CKHHNVFSNCQSLAKQNACQTEWMKSKCAASCFC).

Expressed by the venom gland.

It localises to the secreted. The chain is Cysteine-rich venom protein kaouthin-2 from Naja kaouthia (Monocled cobra).